Reading from the N-terminus, the 599-residue chain is Zinc finger BED domain-containing protein 3 (599 aa).

The segment at 70–104 (LNGGMGSPGNGPGTPLSRNNYAHHHQQHQNQQHVG) is disordered. Residues 72–81 (GGMGSPGNGP) show a composition bias toward gly residues. A BED-type zinc finger spans residues 123 to 176 (VKTAKVWRYFDELPTIEQAAECRICRKKIKATNSSTTGMIRHLRSCHVQEYQLV). Zn(2+)-binding residues include Cys-144, Cys-147, His-164, and His-169. 2 disordered regions span residues 208–283 (GIEN…QCQN) and 440–491 (ATSS…SSID). 2 stretches are compositionally biased toward low complexity: residues 223–246 (SQKS…SHFS) and 268–283 (SNSI…QCQN). A compositionally biased stretch (polar residues) spans 440–455 (ATSSYEDVSVNESQMA). Over residues 460–483 (GDEEEEIMEEEVEEDENVEIEDDT) the composition is skewed to acidic residues.

In terms of tissue distribution, expressed in neuronal cell bodies in the ventral cord and HSN neurons.

The protein localises to the nucleus. In terms of biological role, probable transcription factor. Involved in vulval organogenesis. During vulval development, may play a role in the regulation of cell cycle regulators such as cul-1. Positively modulates expression of homeobox protein lin-39, perhaps by binding to regulatory regions of the lin-39 gene, acting in the vulval lineage. Plays a role in larval molting. This Caenorhabditis elegans protein is Zinc finger BED domain-containing protein 3.